Reading from the N-terminus, the 296-residue chain is Nucleotide-binding protein SPCG_1551 (296 aa).

Glycine 13–threonine 20 contributes to the ATP binding site. Aspartate 63–serine 66 serves as a coordination point for GTP.

Belongs to the RapZ-like family.

Functionally, displays ATPase and GTPase activities. This is Nucleotide-binding protein SPCG_1551 from Streptococcus pneumoniae (strain CGSP14).